We begin with the raw amino-acid sequence, 342 residues long: Trans-3-hydroxy-L-proline dehydratase (342 aa).

S90 (proton acceptor) is an active-site residue. Substrate contacts are provided by residues 91–92 (GS), D251, and 256–257 (GT).

It belongs to the proline racemase family.

It carries out the reaction trans-3-hydroxy-L-proline = 1-pyrroline-2-carboxylate + H2O. Catalyzes the dehydration of trans-3-hydroxy-L-proline (t3LHyp) to Delta(1)-pyrroline-2-carboxylate (Pyr2C). Is likely involved in a degradation pathway that converts t3LHyp to L-proline, which would allow P.denitrificans to grow on t3LHyp as a sole carbon source. Displays neither proline racemase activity nor 4-hydroxyproline 2-epimerase activity. In Paracoccus denitrificans (strain Pd 1222), this protein is Trans-3-hydroxy-L-proline dehydratase.